A 545-amino-acid chain; its full sequence is Cytochrome P450 10 (545 aa).

C493 contacts heme.

It belongs to the cytochrome P450 family. The cofactor is heme. In terms of tissue distribution, abundantly expressed in the female gonadotropic hormone producing dorsal bodies.

Functionally, may be involved in the synthesis of the female gonadotropic hormone produced by the dorsal bodies. This is Cytochrome P450 10 (CYP10) from Lymnaea stagnalis (Great pond snail).